Consider the following 329-residue polypeptide: rRNA 2'-O-methyltransferase fibrillarin (329 aa).

Residues Met-1–Gly-85 form a disordered region. Over residues Arg-13–Gly-84 the composition is skewed to gly residues. Residues Thr-181 to Ser-182, Glu-200 to Phe-201, Asp-225 to Ala-226, and Asp-245 to Gln-248 contribute to the S-adenosyl-L-methionine site.

This sequence belongs to the methyltransferase superfamily. Fibrillarin family. As to quaternary structure, component of box C/D small nucleolar ribonucleoprotein (snoRNP) particles that contain SNU13, NOP1, SIK1/NOP56 and NOP58, plus a guide RNA. In terms of processing, by homology to other fibrillarins, some or all of the N-terminal domain arginines are modified to asymmetric dimethylarginine (DMA).

It localises to the nucleus. The protein resides in the nucleolus. The enzyme catalyses L-glutaminyl-[histone H2A] + S-adenosyl-L-methionine = N(5)-methyl-L-glutaminyl-[histone H2A] + S-adenosyl-L-homocysteine + H(+). Its function is as follows. S-adenosyl-L-methionine-dependent methyltransferase that has the ability to methylate both RNAs and proteins. Involved in pre-rRNA processing. Utilizes the methyl donor S-adenosyl-L-methionine to catalyze the site-specific 2'-hydroxyl methylation of ribose moieties in pre-ribosomal RNA. Site specificity is provided by a guide RNA that base pairs with the substrate. Methylation occurs at a characteristic distance from the sequence involved in base pairing with the guide RNA. Also acts as a protein methyltransferase by mediating methylation of 'Gln-105' of histone H2A (H2AQ105me), a modification that impairs binding of the FACT complex and is specifically present at 35S ribosomal DNA locus. This chain is rRNA 2'-O-methyltransferase fibrillarin (NOP1), found in Debaryomyces hansenii (strain ATCC 36239 / CBS 767 / BCRC 21394 / JCM 1990 / NBRC 0083 / IGC 2968) (Yeast).